Here is a 210-residue protein sequence, read N- to C-terminus: Protein-methionine-sulfoxide reductase heme-binding subunit MsrQ (210 aa).

A run of 6 helical transmembrane segments spans residues 8-28, 37-57, 75-95, 110-130, 147-167, and 169-189; these read LAVF…AWIF, VLVE…LAMT, LGLW…LFIL, PYII…VTSN, LVYV…RADL, and EWAL…PMIA.

It belongs to the MsrQ family. As to quaternary structure, heterodimer of a catalytic subunit (MsrP) and a heme-binding subunit (MsrQ). It depends on FMN as a cofactor. Requires heme b as cofactor.

The protein resides in the cell inner membrane. Functionally, part of the MsrPQ system that repairs oxidized periplasmic proteins containing methionine sulfoxide residues (Met-O), using respiratory chain electrons. Thus protects these proteins from oxidative-stress damage caused by reactive species of oxygen and chlorine generated by the host defense mechanisms. MsrPQ is essential for the maintenance of envelope integrity under bleach stress, rescuing a wide series of structurally unrelated periplasmic proteins from methionine oxidation. MsrQ provides electrons for reduction to the reductase catalytic subunit MsrP, using the quinone pool of the respiratory chain. The protein is Protein-methionine-sulfoxide reductase heme-binding subunit MsrQ of Pseudomonas syringae pv. tomato (strain ATCC BAA-871 / DC3000).